The chain runs to 248 residues: 3-deoxy-manno-octulosonate cytidylyltransferase (248 aa).

Belongs to the KdsB family.

It localises to the cytoplasm. It carries out the reaction 3-deoxy-alpha-D-manno-oct-2-ulosonate + CTP = CMP-3-deoxy-beta-D-manno-octulosonate + diphosphate. It functions in the pathway nucleotide-sugar biosynthesis; CMP-3-deoxy-D-manno-octulosonate biosynthesis; CMP-3-deoxy-D-manno-octulosonate from 3-deoxy-D-manno-octulosonate and CTP: step 1/1. The protein operates within bacterial outer membrane biogenesis; lipopolysaccharide biosynthesis. Activates KDO (a required 8-carbon sugar) for incorporation into bacterial lipopolysaccharide in Gram-negative bacteria. The protein is 3-deoxy-manno-octulosonate cytidylyltransferase of Syntrophus aciditrophicus (strain SB).